Reading from the N-terminus, the 151-residue chain is UPF0178 protein Spea_2958 (151 aa).

It belongs to the UPF0178 family.

The chain is UPF0178 protein Spea_2958 from Shewanella pealeana (strain ATCC 700345 / ANG-SQ1).